The sequence spans 147 residues: UPF0178 protein VS_2364 (147 aa).

This sequence belongs to the UPF0178 family.

The sequence is that of UPF0178 protein VS_2364 from Vibrio atlanticus (strain LGP32) (Vibrio splendidus (strain Mel32)).